Consider the following 1040-residue polypeptide: Contactin-2 (1040 aa).

Residues 1–30 (MGAPARKRASLLLLLLATMALVSSPGWSFS) form the signal peptide. Ig-like C2-type domains follow at residues 39 to 130 (PVFE…AVLR), 135 to 224 (QEFS…SVFS), 241 to 324 (PSIK…GRII), 329 to 413 (PEWL…AELA), 419 to 506 (PDFR…GILS), and 511 to 605 (TKIT…ATVL). 4 cysteine pairs are disulfide-bonded: cysteine 63/cysteine 113, cysteine 157/cysteine 209, cysteine 263/cysteine 308, and cysteine 350/cysteine 397. N-linked (GlcNAc...) asparagine glycosylation is found at asparagine 78, asparagine 200, and asparagine 206. Asparagine 463, asparagine 479, asparagine 500, and asparagine 527 each carry an N-linked (GlcNAc...) asparagine glycan. 4 Fibronectin type-III domains span residues 612-710 (PPGG…TKEA), 715-812 (APSG…SAEE), 817-913 (APAK…MKPP), and 917-1008 (PPGN…NGGT). An N-linked (GlcNAc...) asparagine glycan is attached at asparagine 777. A Cell attachment site motif is present at residues 796 to 798 (RGD). N-linked (GlcNAc...) asparagine glycosylation is found at asparagine 832, asparagine 920, and asparagine 942. The segment at 897 to 922 (GTGPASPSADAMTMKPPPRRPPGNIS) is disordered. Serine 1014 carries GPI-anchor amidated serine lipidation. The propeptide at 1015–1040 (SAVRPAHPGPVFSCMVILMLAGCQRL) is removed in mature form.

The protein belongs to the immunoglobulin superfamily. Contactin family.

The protein resides in the cell membrane. In terms of biological role, in conjunction with another transmembrane protein, CNTNAP2, contributes to the organization of axonal domains at nodes of Ranvier by maintaining voltage-gated potassium channels at the juxtaparanodal region. This is Contactin-2 (Cntn2) from Mus musculus (Mouse).